A 185-amino-acid polypeptide reads, in one-letter code: Elongation factor P (185 aa).

The protein belongs to the elongation factor P family.

It localises to the cytoplasm. It functions in the pathway protein biosynthesis; polypeptide chain elongation. In terms of biological role, involved in peptide bond synthesis. Stimulates efficient translation and peptide-bond synthesis on native or reconstituted 70S ribosomes in vitro. Probably functions indirectly by altering the affinity of the ribosome for aminoacyl-tRNA, thus increasing their reactivity as acceptors for peptidyl transferase. The sequence is that of Elongation factor P from Paraburkholderia phymatum (strain DSM 17167 / CIP 108236 / LMG 21445 / STM815) (Burkholderia phymatum).